Here is a 131-residue protein sequence, read N- to C-terminus: Small ribosomal subunit protein uS8 (131 aa).

The protein belongs to the universal ribosomal protein uS8 family. Part of the 30S ribosomal subunit. Contacts proteins S5 and S12.

In terms of biological role, one of the primary rRNA binding proteins, it binds directly to 16S rRNA central domain where it helps coordinate assembly of the platform of the 30S subunit. The sequence is that of Small ribosomal subunit protein uS8 from Phocaeicola vulgatus (strain ATCC 8482 / DSM 1447 / JCM 5826 / CCUG 4940 / NBRC 14291 / NCTC 11154) (Bacteroides vulgatus).